Consider the following 643-residue polypeptide: Long-chain fatty acid transport protein 4 (643 aa).

Helical transmembrane passes span 20-42 (LPWT…WRFI) and 139-156 (FVGL…AALI). Residue 243 to 254 (YIYTSGTTGLPK) participates in AMP binding.

This sequence belongs to the ATP-dependent AMP-binding enzyme family. As to expression, expressed at highest levels in brain, testis, colon and kidney. Expressed at medium levels in heart and liver, small intestine and stomach. Expressed at low levels in peripheral leukocytes, bone marrow, skeletal muscle and aorta. Expressed in adipose tissue. Expressed in brain gray matter.

The protein resides in the endoplasmic reticulum membrane. The catalysed reaction is a fatty acid(in) = a fatty acid(out). The enzyme catalyses (9Z,12Z)-octadecadienoate(out) = (9Z,12Z)-octadecadienoate(in). It catalyses the reaction (9Z)-octadecenoate(out) = (9Z)-octadecenoate(in). It carries out the reaction hexadecanoate(out) = hexadecanoate(in). The catalysed reaction is a long-chain fatty acid + ATP + CoA = a long-chain fatty acyl-CoA + AMP + diphosphate. The enzyme catalyses hexadecanoate + ATP + CoA = hexadecanoyl-CoA + AMP + diphosphate. It catalyses the reaction (E)-hexadec-2-enoate + ATP + CoA = (2E)-hexadecenoyl-CoA + AMP + diphosphate. It carries out the reaction (9Z)-octadecenoate + ATP + CoA = (9Z)-octadecenoyl-CoA + AMP + diphosphate. The catalysed reaction is (5Z,8Z,11Z,14Z)-eicosatetraenoate + ATP + CoA = (5Z,8Z,11Z,14Z)-eicosatetraenoyl-CoA + AMP + diphosphate. The enzyme catalyses a very long-chain fatty acid + ATP + CoA = a very long-chain fatty acyl-CoA + AMP + diphosphate. It catalyses the reaction tetracosanoate + ATP + CoA = tetracosanoyl-CoA + AMP + diphosphate. Functionally, mediates the levels of long-chain fatty acids (LCFA) in the cell by facilitating their transport across cell membranes. Appears to be the principal fatty acid transporter in small intestinal enterocytes. Also functions as an acyl-CoA ligase catalyzing the ATP-dependent formation of fatty acyl-CoA using LCFA and very-long-chain fatty acids (VLCFA) as substrates, which prevents fatty acid efflux from cells and might drive more fatty acid uptake. Plays a role in the formation of the epidermal barrier. Required for fat absorption in early embryogenesis. Probably involved in fatty acid transport across the blood barrier. Indirectly inhibits RPE65 via substrate competition and via production of VLCFA derivatives like lignoceroyl-CoA. Prevents light-induced degeneration of rods and cones. This chain is Long-chain fatty acid transport protein 4, found in Homo sapiens (Human).